Here is a 121-residue protein sequence, read N- to C-terminus: Large ribosomal subunit protein bL12 (121 aa).

It belongs to the bacterial ribosomal protein bL12 family. In terms of assembly, homodimer. Part of the ribosomal stalk of the 50S ribosomal subunit. Forms a multimeric L10(L12)X complex, where L10 forms an elongated spine to which 2 to 4 L12 dimers bind in a sequential fashion. Binds GTP-bound translation factors.

In terms of biological role, forms part of the ribosomal stalk which helps the ribosome interact with GTP-bound translation factors. Is thus essential for accurate translation. The polypeptide is Large ribosomal subunit protein bL12 (Pelagibacter ubique (strain HTCC1062)).